Reading from the N-terminus, the 370-residue chain is Proline-rich protein 5-like (370 aa).

Phosphoserine is present on S28. Disordered regions lie at residues 312–346 (LGEE…LDSP) and 351–370 (LEDV…ASLS).

It belongs to the PROTOR family. Interacts with the mammalian target of rapamycin complex 2 (mTORC2) which contains MTOR, MLST8, PRR5, RICTOR, MAPKAP1 and DEPTOR. Interacts with RFFL. Interacts (via C-terminus) with ZFP36 (via C-terminus); this interaction may accelerate ZFP36-mediated mRNA decay during stress. Interacts with RICTOR. Ubiquitinated. Ubiquitination by RFFL promotes proteasomal degradation of PRR5L thereby modifying the substrate-specific activity of the mTORC2 complex. Ubiquitination by RFFL is stimulated by LPA/lysophosphatidic acid.

Its function is as follows. Associates with the mTORC2 complex that regulates cellular processes including survival and organization of the cytoskeleton. Regulates the activity of the mTORC2 complex in a substrate-specific manner preventing for instance the specific phosphorylation of PKCs and thereby controlling cell migration. Plays a role in the stimulation of ZFP36-mediated mRNA decay of several ZFP36-associated mRNAs, such as TNF-alpha and GM-CSF, in response to stress. Required for ZFP36 localization to cytoplasmic stress granule (SG) and P-body (PB) in response to stress. In Mus musculus (Mouse), this protein is Proline-rich protein 5-like (Prr5l).